A 402-amino-acid chain; its full sequence is Uroporphyrinogen decarboxylase 1, chloroplastic (402 aa).

The N-terminal 50 residues, 1 to 50, are a transit peptide targeting the chloroplast; that stretch reads MISATATAAFLAAAPASSSSCTTHRRRSGLPAISASLATASSTEEPLLVR. Residues 67–71, Phe86, Ser116, Asp117, Tyr193, Ser248, and His363 each bind substrate; that span reads RQAGR.

This sequence belongs to the uroporphyrinogen decarboxylase family. In terms of assembly, homodimer.

Its subcellular location is the plastid. The protein localises to the chloroplast. The catalysed reaction is uroporphyrinogen III + 4 H(+) = coproporphyrinogen III + 4 CO2. It functions in the pathway porphyrin-containing compound metabolism; protoporphyrin-IX biosynthesis; coproporphyrinogen-III from 5-aminolevulinate: step 4/4. Its function is as follows. Catalyzes the decarboxylation of four acetate groups of uroporphyrinogen-III to yield coproporphyrinogen-III. The protein is Uroporphyrinogen decarboxylase 1, chloroplastic of Oryza sativa subsp. japonica (Rice).